Reading from the N-terminus, the 1048-residue chain is MGRNKITIEKISNERNRQATFTKRKNGLIKKAMELSILCDCEIAMIVFSSNNKLFQYSSRDMDKLLIRYTDNTDNTRKNLTNQDYNRVFGNKKSKNDDEDGDDDGDEDLGETPTTPHGNLNAHPIGSMENNNNNNNNNNNNNNNNNNNINNNNNNNNNSHHNNNNGNNNNNNNNNNNNNSNNNSNNNNSNNGNSNNNNNGNNANHNMHHHNGNSANISPMQMSQQANNNNSNNNNNNGNNNSNSNSNNNNNSNGYQQQQQAAQQAVQQAQMAQQMHLQQQQQYQQLQHIQQQQQQQHQQQQQNMGPNGYNHQQQQLQHQSPPPPPQQQQQQMQHSQQQQNMNGIIGHHSPVIVGNGVSLLQPSKWSASPYGEDLAPLTPRSASYKGIYGNQYPPQMQPVVNSNNNSNGNSNSMNNGISSPPINQQNQQNQKPPIMNKPGGGGQPMYYDYNGYPQQQQPPQNYNSNGGYWGQNVSSPPPPQQQQSANPYIQQQQQPQHQSPYYHGNYSPQQQSPVLNSQNGHHSSPMHPHQMHHQQHQHQQHPQMQQQQQQQQQHQQHPQMQQIQQQQHPQMQQHQQHQQQHPQMQQQHMNNHQINHHHLNSSPEINSQKNVHSSPLIMNSNNNNNNNNNNHHGNDNNNNNNNNSNNNNNNNNSNNNNNINNNINSNSNNNSNVNNGNNNNSGKVYNNNNNSNNGNNNNNKPEQTIPVKIEKEHSSSPTIPEQPSINVSTSSNSAHVFNNITSNSNNNNNNNNNNNNNNNNTNNNNNNNNNNNNNNNTNNINSNNNSSNTNVNVINNSSSSSTPPISPANINTQSPAISPALVPVVTSLNPQGEETSKPKFKKSLNLSIVIPEVGNSKYPPPQCKLTPINVEATKQPDIPTLPSPRDFYPEINLHHDNVSLTPNYWGGWHQTPRGSLLLTGNGGSNNSNSSNNNNNNNNNNNNTNNNNISGNGSSSSSSSSTQNPNGFLGCLSPRSFNFLNENNNNNNNNSSSGNNNNNNNNNNNNNNNNNNNNNNNNNNNNNNNNNNSNPDESDQSFNRKRKSMEPKN.

Positions 1–61 constitute an MADS-box domain; that stretch reads MGRNKITIEK…NKLFQYSSRD (61 aa). The segment covering 74-85 has biased composition (polar residues); the sequence is DNTRKNLTNQDY. Disordered regions lie at residues 74-263, 294-339, 386-812, and 916-1048; these read DNTR…QAAQ, QQQH…QQQQ, GIYG…NINT, and LLLT…EPKN. The segment covering 97–110 has biased composition (acidic residues); sequence DDEDGDDDGDEDLG. Composition is skewed to low complexity over residues 130-205, 212-263, 294-303, 327-339, 393-437, 446-466, and 481-500; these read NNNN…NANH, GNSA…QAAQ, QQQHQQQQQN, QQQQ…QQQQ, PPQM…IMNK, YYDY…NSNG, and QQQS…HQSP. The stretch at 249-304 forms a coiled coil; sequence NNNSNGYQQQQQAAQQAVQQAQMAQQMHLQQQQQYQQLQHIQQQQQQQHQQQQQNM. Positions 506-522 are enriched in polar residues; it reads YSPQQQSPVLNSQNGHH. Over residues 529 to 539 the composition is skewed to basic residues; that stretch reads HQMHHQQHQHQ. Positions 540-593 are enriched in low complexity; the sequence is QHPQMQQQQQQQQQHQQHPQMQQIQQQQHPQMQQHQQHQQQHPQMQQQHMNNHQ. Residues 600 to 618 show a composition bias toward polar residues; the sequence is NSSPEINSQKNVHSSPLIM. A compositionally biased stretch (low complexity) spans 619-699; sequence NSNNNNNNNN…NSNNGNNNNN (81 aa). Residues 715-736 are compositionally biased toward polar residues; that stretch reads SSPTIPEQPSINVSTSSNSAHV. Low complexity-rich tracts occupy residues 738–802, 924–960, and 982–1029; these read NNIT…SSST, SNNS…SSSS, and NNNN…NNSN.

The protein localises to the nucleus. In terms of biological role, transcription factor that regulates cell differentiation during development. Seems to negatively regulate prestalk gene expression and positively regulate prespore gene expression. This Dictyostelium discoideum (Social amoeba) protein is Transcription factor mef2A (mef2A).